We begin with the raw amino-acid sequence, 248 residues long: Positive alginate biosynthesis regulatory protein (248 aa).

Positions 2–117 (NVLIVDDEPL…DLAEALKKAS (116 aa)) constitute a Response regulatory domain. Position 54 is a 4-aspartylphosphate (Asp-54). An HTH LytTR-type domain is found at 142-247 (ISARTRKGIE…VAGVRRLMHQ (106 aa)).

The protein operates within glycan biosynthesis; alginate biosynthesis [regulation]. Its function is as follows. Positive regulator of the algD gene, which codes for a GDP-mannose dehydrogenase, a key step enzyme in the alginate biosynthesis pathway. This chain is Positive alginate biosynthesis regulatory protein (algR), found in Pseudomonas aeruginosa (strain ATCC 15692 / DSM 22644 / CIP 104116 / JCM 14847 / LMG 12228 / 1C / PRS 101 / PAO1).